The chain runs to 156 residues: 6,7-dimethyl-8-ribityllumazine synthase (156 aa).

Residues phenylalanine 23, 57 to 59 (AYE), and 81 to 83 (AII) each bind 5-amino-6-(D-ribitylamino)uracil. Residue 86–87 (GT) participates in (2S)-2-hydroxy-3-oxobutyl phosphate binding. Catalysis depends on histidine 89, which acts as the Proton donor. Phenylalanine 114 contacts 5-amino-6-(D-ribitylamino)uracil. Arginine 128 serves as a coordination point for (2S)-2-hydroxy-3-oxobutyl phosphate.

This sequence belongs to the DMRL synthase family.

The enzyme catalyses (2S)-2-hydroxy-3-oxobutyl phosphate + 5-amino-6-(D-ribitylamino)uracil = 6,7-dimethyl-8-(1-D-ribityl)lumazine + phosphate + 2 H2O + H(+). It participates in cofactor biosynthesis; riboflavin biosynthesis; riboflavin from 2-hydroxy-3-oxobutyl phosphate and 5-amino-6-(D-ribitylamino)uracil: step 1/2. In terms of biological role, catalyzes the formation of 6,7-dimethyl-8-ribityllumazine by condensation of 5-amino-6-(D-ribitylamino)uracil with 3,4-dihydroxy-2-butanone 4-phosphate. This is the penultimate step in the biosynthesis of riboflavin. This chain is 6,7-dimethyl-8-ribityllumazine synthase, found in Helicobacter acinonychis (strain Sheeba).